The primary structure comprises 345 residues: Aspartate-semialdehyde dehydrogenase (345 aa).

NADP(+)-binding positions include Thr11–Val14 and Arg39–Ser40. A phosphate-binding site is contributed by Arg99. Cys130 functions as the Acyl-thioester intermediate in the catalytic mechanism. Gln157 contributes to the substrate binding site. Residue Ser160–Gly161 participates in NADP(+) binding. A phosphate-binding site is contributed by Lys227. Arg249 is a binding site for substrate. His256 acts as the Proton acceptor in catalysis. Residue Asn325 coordinates NADP(+).

It belongs to the aspartate-semialdehyde dehydrogenase family. In terms of assembly, homodimer.

The catalysed reaction is L-aspartate 4-semialdehyde + phosphate + NADP(+) = 4-phospho-L-aspartate + NADPH + H(+). It functions in the pathway amino-acid biosynthesis; L-lysine biosynthesis via DAP pathway; (S)-tetrahydrodipicolinate from L-aspartate: step 2/4. It participates in amino-acid biosynthesis; L-methionine biosynthesis via de novo pathway; L-homoserine from L-aspartate: step 2/3. The protein operates within amino-acid biosynthesis; L-threonine biosynthesis; L-threonine from L-aspartate: step 2/5. Its function is as follows. Catalyzes the NADPH-dependent formation of L-aspartate-semialdehyde (L-ASA) by the reductive dephosphorylation of L-aspartyl-4-phosphate. The polypeptide is Aspartate-semialdehyde dehydrogenase (Mycobacterium bovis (strain ATCC BAA-935 / AF2122/97)).